We begin with the raw amino-acid sequence, 353 residues long: Probable dual-specificity RNA methyltransferase RlmN (353 aa).

The Proton acceptor role is filled by Glu-90. The 231-residue stretch at 96–326 (YKHGNSICIS…VTTRREMGSD (231 aa)) folds into the Radical SAM core domain. A disulfide bond links Cys-103 and Cys-331. [4Fe-4S] cluster is bound by residues Cys-110, Cys-114, and Cys-117. Residues 157 to 158 (GE), Ser-189, 212 to 214 (SLH), and Asn-288 contribute to the S-adenosyl-L-methionine site. The active-site S-methylcysteine intermediate is the Cys-331.

It belongs to the radical SAM superfamily. RlmN family. [4Fe-4S] cluster is required as a cofactor.

It is found in the cytoplasm. The enzyme catalyses adenosine(2503) in 23S rRNA + 2 reduced [2Fe-2S]-[ferredoxin] + 2 S-adenosyl-L-methionine = 2-methyladenosine(2503) in 23S rRNA + 5'-deoxyadenosine + L-methionine + 2 oxidized [2Fe-2S]-[ferredoxin] + S-adenosyl-L-homocysteine. It catalyses the reaction adenosine(37) in tRNA + 2 reduced [2Fe-2S]-[ferredoxin] + 2 S-adenosyl-L-methionine = 2-methyladenosine(37) in tRNA + 5'-deoxyadenosine + L-methionine + 2 oxidized [2Fe-2S]-[ferredoxin] + S-adenosyl-L-homocysteine. Functionally, specifically methylates position 2 of adenine 2503 in 23S rRNA and position 2 of adenine 37 in tRNAs. The chain is Probable dual-specificity RNA methyltransferase RlmN from Clostridium beijerinckii (strain ATCC 51743 / NCIMB 8052) (Clostridium acetobutylicum).